The following is a 1758-amino-acid chain: Collagen alpha-2(IV) chain (1758 aa).

The N-terminal stretch at 1 to 26 (MKQRAALGPVLRLAILALLAVSYVQS) is a signal peptide. Positions 27 to 42 (QATCRDCSNRGCFCVG) are 7S domain. The interval 42–1527 (GEKGSMGAPG…PGAPGAAGPA (1486 aa)) is triple-helical region. Positions 47–62 (MGAPGPQGPPGTQGIR) are enriched in low complexity. Disordered regions lie at residues 47 to 943 (MGAP…GAPG), 955 to 1304 (GVPG…GLPG), 1316 to 1339 (GFPGAKGDLGANGIPGKRGEDGLP), and 1367 to 1525 (GFPG…GAAG). Residues 102-111 (GNDGGNGRPG) show a composition bias toward gly residues. Pro residues predominate over residues 134–149 (PGRPGPPGMPGFPGPP). Residues 189 to 198 (YPGEKGDRGD) are compositionally biased toward basic and acidic residues. The segment covering 224 to 234 (PKGDPGDLGSV) has biased composition (low complexity). A glycan (O-linked (Xyl...) (glycosaminoglycan) serine) is linked at Ser248. Positions 258–267 (PGEKGDKGEP) are enriched in basic and acidic residues. The segment covering 268-283 (GEGGQRGYPGNGGLSG) has biased composition (gly residues). Positions 367-382 (PGPPGLPGRPGNPGPP) are enriched in pro residues. The segment covering 398–407 (GNTGGPGLPG) has biased composition (gly residues). 2 stretches are compositionally biased toward low complexity: residues 408 to 417 (YPGNEGLPGP) and 429 to 439 (APGVSGPSGIP). Basic and acidic residues predominate over residues 464–479 (KDGKPGLDGAPGRKGE). Low complexity-rich tracts occupy residues 495 to 509 (GLPGAPGQRGAPGPN) and 568 to 584 (PVGDAGDDGLPGPAGRP). Positions 638–648 (PSGPVGPPGAP) are enriched in pro residues. 3 stretches are compositionally biased toward gly residues: residues 693 to 702 (GAKGDGGLPG), 737 to 746 (GTKGEGGYPG), and 782 to 791 (GDKGFGGVPG). Residues 839-858 (LPGLPGTPGLEGQRGFPGAP) show a composition bias toward low complexity. Over residues 859 to 868 (GLKGGDGLPG) the composition is skewed to gly residues. Residues 929-938 (APGQSGAPGL) are compositionally biased toward low complexity. Positions 958 to 967 (GFKGDGGLPG) are enriched in gly residues. Residues 968–980 (LPGLNGPKGEPGV) show a composition bias toward low complexity. The span at 988–997 (GMKGNGGLPG) shows a compositional bias: gly residues. The segment covering 1040 to 1056 (LPGQPGLRGPQGPSGLP) has biased composition (low complexity). Over residues 1194 to 1203 (GLPGLGGEKG) the composition is skewed to gly residues. The segment covering 1237 to 1250 (FPGQPGQEGLPGLS) has biased composition (low complexity). Residues 1251 to 1260 (GEKGMGGLPG) show a composition bias toward gly residues. The segment covering 1373 to 1382 (GLKGEGGLPG) has biased composition (gly residues). Low complexity-rich tracts occupy residues 1413-1425 (LPGRDGLPGADGP) and 1433-1454 (GPQNLVEPGEKGLPGLPGAPGL). Composition is skewed to gly residues over residues 1492 to 1501 (GEKGMGGLPG) and 1507 to 1516 (GQPGGPGAPG). In terms of domain architecture, Collagen IV NC1 spans 1531–1754 (GFVLVKHSQT…SRCQVCVKST (224 aa)). 6 disulfides stabilise this stretch: Cys1546-Cys1635, Cys1579-Cys1632, Cys1591-Cys1597, Cys1654-Cys1750, Cys1688-Cys1747, and Cys1700-Cys1707.

The protein belongs to the type IV collagen family. In terms of assembly, trimers of two alpha 1(IV) and one alpha 2(IV) chain. Type IV collagen forms a mesh-like network linked through intermolecular interactions between 7S domains and between NC1 domains. Prolines at the third position of the tripeptide repeating unit (G-X-Y) are hydroxylated in some or all of the chains. Post-translationally, type IV collagens contain numerous cysteine residues which are involved in inter- and intramolecular disulfide bonding. 12 of these, located in the NC1 domain, are conserved in all known type IV collagens. In terms of processing, the trimeric structure of the NC1 domains is stabilized by covalent bonds between Lys and Met residues. As to expression, localizes to the basement membrane between distal tip cells and the germline. Localizes to the intestinal basement membrane.

The protein localises to the secreted. It localises to the extracellular space. The protein resides in the extracellular matrix. It is found in the basement membrane. Functionally, collagen type IV is specific for basement membranes. Together with fbl-1 and downstream of metalloprotease mig-17, recruits nidogen nid-1 to the gonad basement membrane thereby probably inducing basement membrane remodeling required for the directional migration of distal tip cells. Required to restrict presynaptic growth at the neuromuscular junctions in late larval stage and in adult motor neurons. Vital for embryonic development. In Caenorhabditis elegans, this protein is Collagen alpha-2(IV) chain.